A 313-amino-acid polypeptide reads, in one-letter code: 4-hydroxyproline 2-epimerase (313 aa).

Residues 1 to 23 (MHVIDSHTGGEPTRVILSGGPHL) are disordered. The active-site Proton acceptor is Cys-85. Substrate is bound by residues 86–87 (GH), His-205, and Asp-231. Cys-235 functions as the Proton donor in the catalytic mechanism. 236–237 (GT) lines the substrate pocket.

The protein belongs to the proline racemase family.

The catalysed reaction is trans-4-hydroxy-L-proline = cis-4-hydroxy-D-proline. Its function is as follows. Catalyzes the epimerization of trans-4-hydroxy-L-proline (t4LHyp) to cis-4-hydroxy-D-proline (c4DHyp). Is likely involved in a degradation pathway that converts t4LHyp to alpha-ketoglutarate. Displays no proline racemase activity. This Ruegeria pomeroyi (strain ATCC 700808 / DSM 15171 / DSS-3) (Silicibacter pomeroyi) protein is 4-hydroxyproline 2-epimerase.